Here is a 581-residue protein sequence, read N- to C-terminus: Glutamyl-tRNA reductase (581 aa).

Substrate is bound by residues 49–52 (TCNR), Ser-109, 114–116 (EGQ), and Gln-120. The Nucleophile role is filled by Cys-50. 192 to 197 (GAGSMS) is a binding site for NADP(+). The interval 292-416 (PAVEDTAVQE…AEAPRPQPVL (125 aa)) is insert.

The protein belongs to the glutamyl-tRNA reductase family. As to quaternary structure, homodimer.

It catalyses the reaction (S)-4-amino-5-oxopentanoate + tRNA(Glu) + NADP(+) = L-glutamyl-tRNA(Glu) + NADPH + H(+). Its pathway is porphyrin-containing compound metabolism; protoporphyrin-IX biosynthesis; 5-aminolevulinate from L-glutamyl-tRNA(Glu): step 1/2. Functionally, catalyzes the NADPH-dependent reduction of glutamyl-tRNA(Glu) to glutamate 1-semialdehyde (GSA). The sequence is that of Glutamyl-tRNA reductase from Streptomyces coelicolor (strain ATCC BAA-471 / A3(2) / M145).